The primary structure comprises 440 residues: Transposon Ty1-DR1 Gag polyprotein (440 aa).

Polar residues-rich tracts occupy residues 1 to 10 (MESQQLSNYP), 48 to 60 (TKAN…TPAS), and 127 to 152 (QSQF…GNTF). 3 disordered regions span residues 1–93 (MESQ…MMTQ), 126–173 (PQSQ…RPPP), and 352–440 (GSRN…PGTY). Residues 153-165 (TDSSSADSDMTST) show a composition bias toward low complexity. Residues 299 to 401 (NNGIHINNKV…NSKSKTARAH (103 aa)) form an RNA-binding region. Low complexity predominate over residues 402–418 (NVSTSNNSPSTDNDSIS). S416 is modified (phosphoserine). Residues 419 to 428 (KSTTEPIQLN) show a composition bias toward polar residues. A compositionally biased stretch (basic and acidic residues) spans 429–440 (NKHDLHLRPGTY).

As to quaternary structure, homotrimer.

The protein resides in the cytoplasm. Functionally, capsid protein (CA) is the structural component of the virus-like particle (VLP), forming the shell that encapsulates the retrotransposons dimeric RNA genome. The particles are assembled from trimer-clustered units and there are holes in the capsid shells that allow for the diffusion of macromolecules. CA also has nucleocapsid-like chaperone activity, promoting primer tRNA(i)-Met annealing to the multipartite primer-binding site (PBS), dimerization of Ty1 RNA and initiation of reverse transcription. In Saccharomyces cerevisiae (strain ATCC 204508 / S288c) (Baker's yeast), this protein is Transposon Ty1-DR1 Gag polyprotein (TY1A-DR1).